The chain runs to 119 residues: Large ribosomal subunit protein bL20 (119 aa).

The protein belongs to the bacterial ribosomal protein bL20 family.

Binds directly to 23S ribosomal RNA and is necessary for the in vitro assembly process of the 50S ribosomal subunit. It is not involved in the protein synthesizing functions of that subunit. This Nitrosomonas eutropha (strain DSM 101675 / C91 / Nm57) protein is Large ribosomal subunit protein bL20.